A 446-amino-acid polypeptide reads, in one-letter code: Exodeoxyribonuclease 7 large subunit (446 aa).

It belongs to the XseA family. Heterooligomer composed of large and small subunits.

It localises to the cytoplasm. It carries out the reaction Exonucleolytic cleavage in either 5'- to 3'- or 3'- to 5'-direction to yield nucleoside 5'-phosphates.. Functionally, bidirectionally degrades single-stranded DNA into large acid-insoluble oligonucleotides, which are then degraded further into small acid-soluble oligonucleotides. The sequence is that of Exodeoxyribonuclease 7 large subunit from Streptococcus thermophilus (strain CNRZ 1066).